We begin with the raw amino-acid sequence, 123 residues long: Small ribosomal subunit protein uS12 (123 aa).

D89 is subject to 3-methylthioaspartic acid. Residues 101–123 (TLDTQGVKDRRQRRSKYGAKRPK) are disordered. Residues 110–123 (RRQRRSKYGAKRPK) show a composition bias toward basic residues.

The protein belongs to the universal ribosomal protein uS12 family. In terms of assembly, part of the 30S ribosomal subunit. Contacts proteins S8 and S17. May interact with IF1 in the 30S initiation complex.

Its function is as follows. With S4 and S5 plays an important role in translational accuracy. Functionally, interacts with and stabilizes bases of the 16S rRNA that are involved in tRNA selection in the A site and with the mRNA backbone. Located at the interface of the 30S and 50S subunits, it traverses the body of the 30S subunit contacting proteins on the other side and probably holding the rRNA structure together. The combined cluster of proteins S8, S12 and S17 appears to hold together the shoulder and platform of the 30S subunit. This Paramagnetospirillum magneticum (strain ATCC 700264 / AMB-1) (Magnetospirillum magneticum) protein is Small ribosomal subunit protein uS12.